Here is a 316-residue protein sequence, read N- to C-terminus: UDP-N-acetylenolpyruvoylglucosamine reductase (316 aa).

The region spanning 27–225 (VGGKAERFYR…KTAINALLKK (199 aa)) is the FAD-binding PCMH-type domain. Arg190 is a catalytic residue. Ser239 functions as the Proton donor in the catalytic mechanism. Glu309 is an active-site residue.

This sequence belongs to the MurB family. Requires FAD as cofactor.

Its subcellular location is the cytoplasm. It carries out the reaction UDP-N-acetyl-alpha-D-muramate + NADP(+) = UDP-N-acetyl-3-O-(1-carboxyvinyl)-alpha-D-glucosamine + NADPH + H(+). The protein operates within cell wall biogenesis; peptidoglycan biosynthesis. Cell wall formation. The polypeptide is UDP-N-acetylenolpyruvoylglucosamine reductase (Coxiella burnetii (strain CbuG_Q212) (Coxiella burnetii (strain Q212))).